Reading from the N-terminus, the 91-residue chain is Small ribosomal subunit protein bS16 (91 aa).

It belongs to the bacterial ribosomal protein bS16 family.

The protein is Small ribosomal subunit protein bS16 of Levilactobacillus brevis (strain ATCC 367 / BCRC 12310 / CIP 105137 / JCM 1170 / LMG 11437 / NCIMB 947 / NCTC 947) (Lactobacillus brevis).